Here is a 186-residue protein sequence, read N- to C-terminus: Ribosome-recycling factor (186 aa).

The protein belongs to the RRF family.

The protein resides in the cytoplasm. In terms of biological role, responsible for the release of ribosomes from messenger RNA at the termination of protein biosynthesis. May increase the efficiency of translation by recycling ribosomes from one round of translation to another. In Rickettsia rickettsii (strain Iowa), this protein is Ribosome-recycling factor.